A 184-amino-acid polypeptide reads, in one-letter code: MSRLAKKPIVLPQGVTVEIKDNVVKVKGPKGELSQEFLPYVKIEVEGNEVWVRPNEEQIIRKSDWRKVKMFQGTYWSLIRNMVVGVTEGYKKELEIVGIGYRAQLQGNTLVMNLGYAHPVVYEIPSDVKIEVPAPNRIIVSGIDKQRVGQVAAEIRAFRPPNVYTGKGIRYVGEVVRQKEGKKA.

This sequence belongs to the universal ribosomal protein uL6 family. As to quaternary structure, part of the 50S ribosomal subunit.

Functionally, this protein binds to the 23S rRNA, and is important in its secondary structure. It is located near the subunit interface in the base of the L7/L12 stalk, and near the tRNA binding site of the peptidyltransferase center. The sequence is that of Large ribosomal subunit protein uL6 from Thermotoga maritima (strain ATCC 43589 / DSM 3109 / JCM 10099 / NBRC 100826 / MSB8).